A 241-amino-acid chain; its full sequence is uncharacterized protein (241 aa).

Its subcellular location is the cytoplasm. It localises to the nucleus. This is an uncharacterized protein from Schizosaccharomyces pombe (strain 972 / ATCC 24843) (Fission yeast).